We begin with the raw amino-acid sequence, 496 residues long: MFS transporter cpaT (496 aa).

The tract at residues 1-45 (MGHQEEPPRICKTPSGHEQGEGPAEKTSKPSTEEVGWDGPTDPAR) is disordered. Residues 18 to 32 (EQGEGPAEKTSKPST) show a composition bias toward basic and acidic residues. N48 is a glycosylation site (N-linked (GlcNAc...) asparagine). A helical membrane pass occupies residues 58-78 (MGIISYLTFLTPLTSSIVAPA). A glycan (N-linked (GlcNAc...) asparagine) is linked at N90. The next 5 helical transmembrane spans lie at 93–113 (LASF…LFLA), 130–150 (FIFT…ALLV), 154–174 (FAGI…ADMF), 180–200 (GVAM…GPIA), and 212–232 (WVFW…LFVL). The N-linked (GlcNAc...) asparagine glycan is linked to N252. 6 consecutive transmembrane segments (helical) span residues 288 to 308 (VALF…LFTT), 325 to 345 (GLVY…FGAL), 367 to 387 (LPPL…YGWS), 395 to 415 (IMPI…LLPI), 427 to 449 (AASA…PLAG), and 463 to 483 (SLLG…YFYG).

It belongs to the major facilitator superfamily.

The protein resides in the membrane. MFS transporter; part of the gene cluster that mediates the biosynthesis of the fungal neurotoxin cyclopiazonic acid (CPA), a nanomolar inhibitor of Ca(2+)-ATPase with a unique pentacyclic indole tetramic acid scaffold. This is MFS transporter cpaT from Aspergillus oryzae (Yellow koji mold).